The following is a 244-amino-acid chain: Phosphonates import ATP-binding protein PhnC 2 (244 aa).

In terms of domain architecture, ABC transporter spans 6–244 (IECHNLETAY…LQAQFVVNNQ (239 aa)). 41-48 (GLNGAGKS) lines the ATP pocket.

This sequence belongs to the ABC transporter superfamily. Phosphonates importer (TC 3.A.1.9.1) family. As to quaternary structure, the complex is composed of two ATP-binding proteins (PhnC), two transmembrane proteins (PhnE) and a solute-binding protein (PhnD).

The protein resides in the cell inner membrane. It carries out the reaction phosphonate(out) + ATP + H2O = phosphonate(in) + ADP + phosphate + H(+). Part of the ABC transporter complex PhnCDE involved in phosphonates import. Responsible for energy coupling to the transport system. The chain is Phosphonates import ATP-binding protein PhnC 2 from Nostoc sp. (strain PCC 7120 / SAG 25.82 / UTEX 2576).